A 656-amino-acid chain; its full sequence is Threonine--tRNA ligase (656 aa).

The region spanning 1–63 (MAEIQLTFPD…LEDGAIEIIT (63 aa)) is the TGS domain. The segment at 243-541 (DHRVIGNQLD…LTEIYKGAFP (299 aa)) is catalytic. Cys-337, His-388, and His-518 together coordinate Zn(2+).

The protein belongs to the class-II aminoacyl-tRNA synthetase family. In terms of assembly, homodimer. The cofactor is Zn(2+).

The protein resides in the cytoplasm. It catalyses the reaction tRNA(Thr) + L-threonine + ATP = L-threonyl-tRNA(Thr) + AMP + diphosphate + H(+). Its function is as follows. Catalyzes the attachment of threonine to tRNA(Thr) in a two-step reaction: L-threonine is first activated by ATP to form Thr-AMP and then transferred to the acceptor end of tRNA(Thr). Also edits incorrectly charged L-seryl-tRNA(Thr). The chain is Threonine--tRNA ligase from Latilactobacillus sakei subsp. sakei (strain 23K) (Lactobacillus sakei subsp. sakei).